A 298-amino-acid polypeptide reads, in one-letter code: MDLVNHLPDRLLFAVPKKGRLYEKCCNLLSGADIQFRRSNRLDIALSTNLPIALIFLPAADIPVFVGEGNCDLGITGLDQIKEAEQFDNIEDLLDLKFGSCKLQIQVPADGEYEKPEQLVGKKIVSSFTKLSTDYFKQLSDKPTNIRYVGGSVEASCALGVADAIVDLVESGETMKAAGLKAIETILETSAHLISSKKSKFPEMVNIIVQRLQGVLAAQEYVLCNYNAPKSIQAKCLTITPGRRAATVSTLDKHSDDEEDWVAISSMVNRKEIGNVMDELKKAGATDILVLEISNCRV.

The protein belongs to the ATP phosphoribosyltransferase family.

It localises to the cytoplasm. The enzyme catalyses 1-(5-phospho-beta-D-ribosyl)-ATP + diphosphate = 5-phospho-alpha-D-ribose 1-diphosphate + ATP. The protein operates within amino-acid biosynthesis; L-histidine biosynthesis; L-histidine from 5-phospho-alpha-D-ribose 1-diphosphate: step 1/9. Its function is as follows. Catalyzes the condensation of ATP and 5-phosphoribose 1-diphosphate to form N'-(5'-phosphoribosyl)-ATP (PR-ATP). Has a crucial role in the pathway because the rate of histidine biosynthesis seems to be controlled primarily by regulation of the enzymatic activity. This is ATP phosphoribosyltransferase (HIS1) from Candida albicans (strain SC5314 / ATCC MYA-2876) (Yeast).